Here is a 164-residue protein sequence, read N- to C-terminus: MSTPEVTPTLSDSNGNEAGVQTQFTIQEISDLLPHRYPFALVDRIIDFQPGKCAVGLKNVTINEPFFPGHIPDRPIMPGVLIVESMAQVGGVILTQLPGMRGKFFAFAGIDGVRFRRPVVPGDQLIMTVELQSFKLQRIAKMQGEARVDGQLVCGGEMLFSLID.

The active site involves H70.

This sequence belongs to the thioester dehydratase family. FabZ subfamily.

The protein localises to the cytoplasm. The enzyme catalyses a (3R)-hydroxyacyl-[ACP] = a (2E)-enoyl-[ACP] + H2O. Functionally, involved in unsaturated fatty acids biosynthesis. Catalyzes the dehydration of short chain beta-hydroxyacyl-ACPs and long chain saturated and unsaturated beta-hydroxyacyl-ACPs. The sequence is that of 3-hydroxyacyl-[acyl-carrier-protein] dehydratase FabZ from Synechocystis sp. (strain ATCC 27184 / PCC 6803 / Kazusa).